A 273-amino-acid chain; its full sequence is MSKLQEIIIEAFERRADITPRNVETHVKDAVMEAIDMLDRGTARVAEKKDGEWIVNDWLKKAVLLSFRIHDNQFIKGGFTNYYDKVPSKWADANSRDFREGGARVVPPATARKGSYIAPGVVLMPSYVNIGAYVDSGTMVDTWATVGSCAQIGKNVHLSGGVGIGGVLEPLQAAPTIIEDNCFIGARSEVVEGVIVEEGSVISMGVYIGQSTRIYDREKDEILYGRVPAGSVVVSGNLPSKDGKYSLYCAVIVKKVDEKTRSKVGINELLRDI.

Positions 104 and 141 each coordinate substrate.

It belongs to the transferase hexapeptide repeat family. In terms of assembly, homotrimer.

It localises to the cytoplasm. The catalysed reaction is (S)-2,3,4,5-tetrahydrodipicolinate + succinyl-CoA + H2O = (S)-2-succinylamino-6-oxoheptanedioate + CoA. Its pathway is amino-acid biosynthesis; L-lysine biosynthesis via DAP pathway; LL-2,6-diaminopimelate from (S)-tetrahydrodipicolinate (succinylase route): step 1/3. This is 2,3,4,5-tetrahydropyridine-2,6-dicarboxylate N-succinyltransferase from Thioalkalivibrio sulfidiphilus (strain HL-EbGR7).